The following is a 252-amino-acid chain: MSRKPIIAGNWKMNKNPQEAKAFVEAVVSKLPSNDLVDVAVAAPAVDLVTTIEAAKDSVLKVAAQNCYFENSGAYTGETSPKVLADMGADYVVIGHSERRDYFHETDEDINKKAKAIFANGLTPIICCGESLETYEAGQAVAFVGAQVSAALEGLSAEQVASLVLAYEPIWAIGTGKSATQEDAQSMCKAVRDVVAADFGQEVADKVRVQYGGSVKPENIKEYMACPDVDGALVGGASLEADSFLALLDFVN.

Position 10-12 (10-12 (NWK)) interacts with substrate. The Electrophile role is filled by histidine 96. Glutamate 168 serves as the catalytic Proton acceptor. Substrate is bound by residues glycine 174, serine 214, and 235–236 (GG).

It belongs to the triosephosphate isomerase family. Homodimer.

The protein resides in the cytoplasm. It carries out the reaction D-glyceraldehyde 3-phosphate = dihydroxyacetone phosphate. The protein operates within carbohydrate biosynthesis; gluconeogenesis. Its pathway is carbohydrate degradation; glycolysis; D-glyceraldehyde 3-phosphate from glycerone phosphate: step 1/1. In terms of biological role, involved in the gluconeogenesis. Catalyzes stereospecifically the conversion of dihydroxyacetone phosphate (DHAP) to D-glyceraldehyde-3-phosphate (G3P). This is Triosephosphate isomerase from Streptococcus equi subsp. zooepidemicus (strain MGCS10565).